Here is a 100-residue protein sequence, read N- to C-terminus: DRCPCPCPCPCPCPVIRPPPPKELTVGINGFGRVVAVNDPFIDPEYMVYMFKYDSTHGRRVVVTAPSPDAPMFVMGVNEKGKLTGMAFRVVDLLRYMFSR.

Residues Asp-39 and Thr-64 each coordinate NAD(+). Arg-89 is a binding site for D-glyceraldehyde 3-phosphate.

The protein belongs to the glyceraldehyde-3-phosphate dehydrogenase family. Homotetramer.

The protein resides in the cytoplasm. The catalysed reaction is D-glyceraldehyde 3-phosphate + phosphate + NAD(+) = (2R)-3-phospho-glyceroyl phosphate + NADH + H(+). It functions in the pathway carbohydrate degradation; glycolysis; pyruvate from D-glyceraldehyde 3-phosphate: step 1/5. May play an important role in regulating the switch between different pathways for energy production during spermiogenesis and in the spermatozoon. Required for sperm motility and male fertility. This is Glyceraldehyde-3-phosphate dehydrogenase, testis-specific from Mesocricetus auratus (Golden hamster).